The sequence spans 352 residues: Phosphoribosylformylglycinamidine cyclo-ligase (352 aa).

This sequence belongs to the AIR synthase family.

It localises to the cytoplasm. It carries out the reaction 2-formamido-N(1)-(5-O-phospho-beta-D-ribosyl)acetamidine + ATP = 5-amino-1-(5-phospho-beta-D-ribosyl)imidazole + ADP + phosphate + H(+). It participates in purine metabolism; IMP biosynthesis via de novo pathway; 5-amino-1-(5-phospho-D-ribosyl)imidazole from N(2)-formyl-N(1)-(5-phospho-D-ribosyl)glycinamide: step 2/2. This is Phosphoribosylformylglycinamidine cyclo-ligase from Pseudomonas putida (strain W619).